A 1653-amino-acid chain; its full sequence is Ciliary rootlet coiled-coil protein 2 (1653 aa).

Positions 1–17 (MSSASSEPGNGDASQQP) are enriched in polar residues. The tract at residues 1–57 (MSSASSEPGNGDASQQPLLGLDTVIQRLEDTILSPTASREDRALTVRGEGRQASPTP) is disordered. Over residues 38 to 50 (SREDRALTVRGEG) the composition is skewed to basic and acidic residues. Coiled-coil stretches lie at residues 86-145 (VARV…SELE) and 310-351 (KVAL…LVAQ). The tract at residues 367-396 (LGEPRRPLRSPQRATSPHQGASPPHICSPA) is disordered. A coiled-coil region spans residues 423–1215 (LKSSQALVAS…QRKLAEVEAA (793 aa)). Positions 1302–1356 (GLQRQSPWASPEQPGSPTKGSDSSQALPGQQGTSPPARPHSPLRWPSPTPGGRSS) are disordered. Positions 1304-1335 (QRQSPWASPEQPGSPTKGSDSSQALPGQQGTS) are enriched in polar residues. Positions 1361-1570 (VATVQDILRD…QAQMTEMEQA (210 aa)) form a coiled coil.

Belongs to the rootletin family.

This chain is Ciliary rootlet coiled-coil protein 2, found in Homo sapiens (Human).